The primary structure comprises 145 residues: Type II secretion system core protein G (145 aa).

A propeptide spans 1-9 (MRATDKQRG) (leader sequence). An N-methylphenylalanine modification is found at F10. The chain crosses the membrane as a helical span at residues 10–30 (FTLLEIMVVIVIIGVLASLVV). The tract at residues 123-145 (AGPDGEMGTEDDITNWGLSKKKK) is disordered.

The protein belongs to the GSP G family. Type II secretion system is composed of four main components: the outer membrane complex, the inner membrane complex, the cytoplasmic secretion ATPase and the periplasm-spanning pseudopilus. Forms homomultimers. Post-translationally, cleaved by the prepilin peptidase. In terms of processing, methylated by prepilin peptidase at the amino group of the N-terminal phenylalanine once the leader sequence is cleaved.

It is found in the cell inner membrane. Functionally, core component of the type II secretion system required for the energy-dependent secretion of extracellular factors such as proteases and toxins from the periplasm. Pseudopilin (pilin-like) protein that polymerizes to form the pseudopilus. Further polymerization triggers pseudopilus growth. The sequence is that of Type II secretion system core protein G (gspG) from Escherichia coli (strain K12).